A 255-amino-acid polypeptide reads, in one-letter code: Triosephosphate isomerase (255 aa).

9 to 11 (NWK) contributes to the substrate binding site. Residue His95 is the Electrophile of the active site. Glu167 acts as the Proton acceptor in catalysis. Residues Gly173, Ser212, and 233 to 234 (GG) contribute to the substrate site.

The protein belongs to the triosephosphate isomerase family. In terms of assembly, homodimer.

The protein resides in the cytoplasm. It catalyses the reaction D-glyceraldehyde 3-phosphate = dihydroxyacetone phosphate. It functions in the pathway carbohydrate biosynthesis; gluconeogenesis. Its pathway is carbohydrate degradation; glycolysis; D-glyceraldehyde 3-phosphate from glycerone phosphate: step 1/1. Involved in the gluconeogenesis. Catalyzes stereospecifically the conversion of dihydroxyacetone phosphate (DHAP) to D-glyceraldehyde-3-phosphate (G3P). This Escherichia fergusonii (strain ATCC 35469 / DSM 13698 / CCUG 18766 / IAM 14443 / JCM 21226 / LMG 7866 / NBRC 102419 / NCTC 12128 / CDC 0568-73) protein is Triosephosphate isomerase.